We begin with the raw amino-acid sequence, 137 residues long: Large ribosomal subunit protein uL16 (137 aa).

The protein belongs to the universal ribosomal protein uL16 family. Part of the 50S ribosomal subunit.

Functionally, binds 23S rRNA and is also seen to make contacts with the A and possibly P site tRNAs. The sequence is that of Large ribosomal subunit protein uL16 from Sorangium cellulosum (strain So ce56) (Polyangium cellulosum (strain So ce56)).